Consider the following 468-residue polypeptide: uncharacterized protein (468 aa).

The signal sequence occupies residues 1–27 (MRKWYFILLAGVLTSVILAFVYDKTKA). PbH1 repeat units follow at residues 125 to 154 (KHDIAISGLTIQDLSVSSEEATAIGIYVSG), 156 to 185 (SSHIAIKDNHIRGIKTTADEGNAHGIAVYG), 189 to 214 (MKDIRIEDNTVEKLTLGASEAVVLNG), 216 to 238 (IDGFTVAGNVVRNNNNIGIDLIG), 249 to 283 (VRNGVVENNTVYQNSTYGNPAYGDEYSAGGIYVDG), 284 to 305 (GHDIEIKNNTVYDNDIGIEATS), 312 to 334 (ANAIQITDNKVYNNAYTGISIGG), and 397 to 420 (NEGNTVNHNVYHKEADQDGIWMWK).

The protein resides in the secreted. This is an uncharacterized protein from Bacillus subtilis (strain 168).